The primary structure comprises 426 residues: Dihydroorotase (426 aa).

Residues His-58 and His-60 each contribute to the Zn(2+) site. Residues His-60–Arg-62 and Asn-92 contribute to the substrate site. Positions 150, 177, and 230 each coordinate Zn(2+). Asn-276 lines the substrate pocket. Asp-303 lines the Zn(2+) pocket. Residue Asp-303 is part of the active site. Substrate is bound by residues His-307 and Phe-321 to Gly-322.

It belongs to the metallo-dependent hydrolases superfamily. DHOase family. Class I DHOase subfamily. It depends on Zn(2+) as a cofactor.

The enzyme catalyses (S)-dihydroorotate + H2O = N-carbamoyl-L-aspartate + H(+). Its pathway is pyrimidine metabolism; UMP biosynthesis via de novo pathway; (S)-dihydroorotate from bicarbonate: step 3/3. In terms of biological role, catalyzes the reversible cyclization of carbamoyl aspartate to dihydroorotate. In Listeria monocytogenes serotype 4b (strain F2365), this protein is Dihydroorotase.